We begin with the raw amino-acid sequence, 254 residues long: Cyclin homolog (254 aa).

The protein belongs to the cyclin family. Cyclin D subfamily.

Functionally, may be highly relevant to the process of cellular transformation and rapid T-cell proliferation effected by HVS during latent infections of T-cells in susceptible hosts. In Saimiriine herpesvirus 2 (strain 11) (SaHV-2), this protein is Cyclin homolog (72).